We begin with the raw amino-acid sequence, 242 residues long: Cysteine desulfuration protein SufE (242 aa).

Residue cysteine 148 is the Cysteine persulfide intermediate of the active site.

Belongs to the SufE family. In terms of assembly, monomer. Interacts with SufS; interaction enhances cysteine desulfurase activity of SufS.

The protein resides in the plastid. Its subcellular location is the apicoplast. It functions in the pathway cofactor biosynthesis; iron-sulfur cluster biosynthesis. Participates in sulfur mobilization (SUF) pathway for iron-sulfur (Fe-S) cluster biogenesis. Enhances cysteine desulfurase activity of SufS. Probably functions as a sulfur acceptor for SufS. The protein is Cysteine desulfuration protein SufE of Plasmodium vivax.